The primary structure comprises 163 residues: CASP-like protein 1C2 (163 aa).

The Cytoplasmic portion of the chain corresponds to 1-6 (MAKSNK). The helical transmembrane segment at 7–27 (IFTNTLRLLALAATVVAIVFM) threads the bilayer. At 28 to 52 (VTSHDSAQVLNLTFTAKYSNTPAFK) the chain is on the extracellular side. Asparagine 38 carries N-linked (GlcNAc...) asparagine glycosylation. The chain crosses the membrane as a helical span at residues 53 to 73 (FLVIGEAIAGGYTVISILLSF). Residues 74–79 (KGLFWR) are Cytoplasmic-facing. The chain crosses the membrane as a helical span at residues 80–100 (LIVILDMVTTVLLTSSISAAL). Residues 101–128 (AIAQVGKKGNTHAGWLPICGQVPDFCDY) lie on the Extracellular side of the membrane. A helical transmembrane segment spans residues 129–149 (VTIALIAGFAAAIIYFVLLLC). The Cytoplasmic segment spans residues 150-163 (SLYVVLSPIFVATP).

The protein belongs to the Casparian strip membrane proteins (CASP) family. Homodimer and heterodimers.

The protein resides in the cell membrane. The chain is CASP-like protein 1C2 from Populus trichocarpa (Western balsam poplar).